The primary structure comprises 129 residues: Cytochrome c oxidase subunit 5B, mitochondrial (129 aa).

The transit peptide at 1-31 directs the protein to the mitochondrion; that stretch reads MASRLLRGAGTLAAQALRARGPSGAAAMRSM. N6-acetyllysine is present on residues lysine 68 and lysine 86. Zn(2+) is bound by residues cysteine 91, cysteine 93, cysteine 113, and cysteine 116. At lysine 121 the chain carries N6-acetyllysine.

This sequence belongs to the cytochrome c oxidase subunit 5B family. Component of the cytochrome c oxidase (complex IV, CIV), a multisubunit enzyme composed of 14 subunits. The complex is composed of a catalytic core of 3 subunits MT-CO1, MT-CO2 and MT-CO3, encoded in the mitochondrial DNA, and 11 supernumerary subunits COX4I1 (or COX4I2), COX5A, COX5B, COX6A1 (or COX6A2), COX6B1 (or COX6B2), COX6C, COX7A2 (or COX7A1), COX7B, COX7C, COX8A and NDUFA4, which are encoded in the nuclear genome. The complex exists as a monomer or a dimer and forms supercomplexes (SCs) in the inner mitochondrial membrane with NADH-ubiquinone oxidoreductase (complex I, CI) and ubiquinol-cytochrome c oxidoreductase (cytochrome b-c1 complex, complex III, CIII), resulting in different assemblies (supercomplex SCI(1)III(2)IV(1) and megacomplex MCI(2)III(2)IV(2)).

It localises to the mitochondrion inner membrane. It functions in the pathway energy metabolism; oxidative phosphorylation. Its function is as follows. Component of the cytochrome c oxidase, the last enzyme in the mitochondrial electron transport chain which drives oxidative phosphorylation. The respiratory chain contains 3 multisubunit complexes succinate dehydrogenase (complex II, CII), ubiquinol-cytochrome c oxidoreductase (cytochrome b-c1 complex, complex III, CIII) and cytochrome c oxidase (complex IV, CIV), that cooperate to transfer electrons derived from NADH and succinate to molecular oxygen, creating an electrochemical gradient over the inner membrane that drives transmembrane transport and the ATP synthase. Cytochrome c oxidase is the component of the respiratory chain that catalyzes the reduction of oxygen to water. Electrons originating from reduced cytochrome c in the intermembrane space (IMS) are transferred via the dinuclear copper A center (CU(A)) of subunit 2 and heme A of subunit 1 to the active site in subunit 1, a binuclear center (BNC) formed by heme A3 and copper B (CU(B)). The BNC reduces molecular oxygen to 2 water molecules using 4 electrons from cytochrome c in the IMS and 4 protons from the mitochondrial matrix. This chain is Cytochrome c oxidase subunit 5B, mitochondrial (COX5B), found in Homo sapiens (Human).